We begin with the raw amino-acid sequence, 256 residues long: uncharacterized protein (256 aa).

The N-terminal stretch at 1-22 is a signal peptide; the sequence is MKSIKRIGLCISLLILSIFVTS. Residue Cys23 is the site of N-palmitoyl cysteine attachment. Cys23 is lipidated: S-diacylglycerol cysteine.

The protein belongs to the staphylococcal tandem lipoprotein family.

Its subcellular location is the cell membrane. This is an uncharacterized protein from Staphylococcus aureus (strain USA300).